The primary structure comprises 176 residues: ATP-dependent protease subunit HslV (176 aa).

Residue threonine 5 is part of the active site. Na(+) contacts are provided by serine 161, cysteine 164, and threonine 167.

The protein belongs to the peptidase T1B family. HslV subfamily. In terms of assembly, a double ring-shaped homohexamer of HslV is capped on each side by a ring-shaped HslU homohexamer. The assembly of the HslU/HslV complex is dependent on binding of ATP.

The protein localises to the cytoplasm. It carries out the reaction ATP-dependent cleavage of peptide bonds with broad specificity.. With respect to regulation, allosterically activated by HslU binding. Protease subunit of a proteasome-like degradation complex believed to be a general protein degrading machinery. The protein is ATP-dependent protease subunit HslV of Desulfitobacterium hafniense (strain DSM 10664 / DCB-2).